The following is a 204-amino-acid chain: Recombination protein RecR (204 aa).

Residues 58–75 (CSVCQNITDVGVDPCALC) form a C4-type zinc finger. Residues 83-181 (SVICVVESPV…HVTKIARGIP (99 aa)) form the Toprim domain.

This sequence belongs to the RecR family.

May play a role in DNA repair. It seems to be involved in an RecBC-independent recombinational process of DNA repair. It may act with RecF and RecO. This is Recombination protein RecR from Pelodictyon phaeoclathratiforme (strain DSM 5477 / BU-1).